Reading from the N-terminus, the 124-residue chain is Fluoride-specific ion channel FluC (124 aa).

4 consecutive transmembrane segments (helical) span residues 4 to 24 (YLVIAVGGSIGAILRYLTGVY), 36 to 56 (GTLIVNVVGSFILSFFMILFL), 63 to 83 (PLWRLFVAVGFCGSYTTLSSI), and 100 to 120 (LLNIALNFGLSFLSAFAGIVL). Residues Gly-75 and Thr-78 each coordinate Na(+).

The protein belongs to the fluoride channel Fluc/FEX (TC 1.A.43) family.

The protein resides in the cell inner membrane. It carries out the reaction fluoride(in) = fluoride(out). Na(+) is not transported, but it plays an essential structural role and its presence is essential for fluoride channel function. Functionally, fluoride-specific ion channel. Important for reducing fluoride concentration in the cell, thus reducing its toxicity. The sequence is that of Fluoride-specific ion channel FluC from Sulfurihydrogenibium sp. (strain YO3AOP1).